A 142-amino-acid chain; its full sequence is Large ribosomal subunit protein uL13 (142 aa).

The protein belongs to the universal ribosomal protein uL13 family. As to quaternary structure, part of the 50S ribosomal subunit.

In terms of biological role, this protein is one of the early assembly proteins of the 50S ribosomal subunit, although it is not seen to bind rRNA by itself. It is important during the early stages of 50S assembly. The protein is Large ribosomal subunit protein uL13 of Francisella tularensis subsp. holarctica (strain FTNF002-00 / FTA).